A 433-amino-acid polypeptide reads, in one-letter code: Serine hydroxymethyltransferase (433 aa).

121–123 (AHV) contacts (6S)-5,6,7,8-tetrahydrofolate. Position 227 is an N6-(pyridoxal phosphate)lysine (Lys227). Glu243 is a binding site for (6S)-5,6,7,8-tetrahydrofolate.

It belongs to the SHMT family. Homodimer. It depends on pyridoxal 5'-phosphate as a cofactor.

Its subcellular location is the cytoplasm. It participates in amino-acid biosynthesis; glycine biosynthesis; glycine from L-serine: step 1/1. In terms of biological role, catalyzes the reversible interconversion of serine and glycine with a modified folate serving as the one-carbon carrier. Also exhibits a pteridine-independent aldolase activity toward beta-hydroxyamino acids, producing glycine and aldehydes, via a retro-aldol mechanism. The sequence is that of Serine hydroxymethyltransferase from Saccharolobus islandicus (strain Y.G.57.14 / Yellowstone #1) (Sulfolobus islandicus).